A 523-amino-acid chain; its full sequence is MSYKQTTYYPSRGNLVRNDSSPYTNTISSETNNSSTSVLSLQGASNVSLGTTGNQLYMGDLDPTWDKNTVRQIWASLGEANINVRMMWNNTLNNGSRSSMGPKNNQGYCFVDFPSSTHAANALLKNGMLIPNFPNKKLKLNWATSSYSNSNNSLNNVKSGNNCSIFVGDLAPNVTESQLFELFINRYASTSHAKIVHDQVTGMSKGYGFVKFTNSDEQQLALSEMQGVFLNGRAIKVGPTSGQQQHVSGNNDYNRSSSSLNNENVDSRFLSKGQSFLSNGNNNMGFKRNHMSQFIYPVQQQPSLNHFTDPNNTTVFIGGLSSLVTEDELRAYFQPFGTIVYVKIPVGKCCGFVQYVDRLSAEAAIAGMQGFPIANSRVRLSWGRSAKQTALLQQAMLSNSLQVQQQQPGLQQPNYGYIPSSTCEAPVLPDNNVSSTMLPGCQILNYSNPYANANGLGSNNFSFYSNNNATNTQATSLLADTSSMDLSGTGGQQVIMQGSEAVVNSTNAMLNRLEQGSNGFMFA.

A disordered region spans residues 1–35 (MSYKQTTYYPSRGNLVRNDSSPYTNTISSETNNSS). The segment covering 24-35 (TNTISSETNNSS) has biased composition (low complexity). RRM domains follow at residues 54-145 (NQLY…WATS), 163-242 (CSIF…PTSG), and 313-385 (TTVF…WGRS). Residues 239 to 260 (PTSGQQQHVSGNNDYNRSSSSL) form a disordered region. Over residues 240 to 260 (TSGQQQHVSGNNDYNRSSSSL) the composition is skewed to polar residues.

As to quaternary structure, component of the U1 small nuclear ribonucleoprotein complex (U1 snRNP).

In terms of biological role, component of the U1 small nuclear ribonucleoprotein complex (U1 snRNP) involved in the initiation of meiotic recombination. Involved in the formation of DSBs at recombination hot-spots through meiosis-specific splicing of REC107 pre-mRNA. Collaborates with MER1 to promote splicing of essential meiotic mRNAs REC10, AMA1, MER3, HFM1, SPO22 and PCH2. NAM8 interacts with the pre-mRNA downstream of the 5' splice site, in a region of non-conserved sequence and is required for efficient splicing of uncapped RNA precursor. The protein is Protein NAM8 of Saccharomyces cerevisiae (strain ATCC 204508 / S288c) (Baker's yeast).